The following is a 448-amino-acid chain: tRNA-2-methylthio-N(6)-dimethylallyladenosine synthase (448 aa).

The MTTase N-terminal domain maps to 2–119 (KKLYIKTFGC…LSDLIAQRRK (118 aa)). Residues cysteine 11, cysteine 48, cysteine 82, cysteine 156, cysteine 160, and cysteine 163 each contribute to the [4Fe-4S] cluster site. The Radical SAM core domain maps to 142–375 (RQTRGSAYVS…LALIEGQSNQ (234 aa)). The 67-residue stretch at 378 to 444 (QKMLGKTERV…NYTLRGELVE (67 aa)) folds into the TRAM domain.

The protein belongs to the methylthiotransferase family. MiaB subfamily. Monomer. It depends on [4Fe-4S] cluster as a cofactor.

The protein localises to the cytoplasm. The catalysed reaction is N(6)-dimethylallyladenosine(37) in tRNA + (sulfur carrier)-SH + AH2 + 2 S-adenosyl-L-methionine = 2-methylsulfanyl-N(6)-dimethylallyladenosine(37) in tRNA + (sulfur carrier)-H + 5'-deoxyadenosine + L-methionine + A + S-adenosyl-L-homocysteine + 2 H(+). Catalyzes the methylthiolation of N6-(dimethylallyl)adenosine (i(6)A), leading to the formation of 2-methylthio-N6-(dimethylallyl)adenosine (ms(2)i(6)A) at position 37 in tRNAs that read codons beginning with uridine. In Polynucleobacter asymbioticus (strain DSM 18221 / CIP 109841 / QLW-P1DMWA-1) (Polynucleobacter necessarius subsp. asymbioticus), this protein is tRNA-2-methylthio-N(6)-dimethylallyladenosine synthase.